Reading from the N-terminus, the 222-residue chain is Leucyl/phenylalanyl-tRNA--protein transferase (222 aa).

This sequence belongs to the L/F-transferase family.

Its subcellular location is the cytoplasm. The enzyme catalyses N-terminal L-lysyl-[protein] + L-leucyl-tRNA(Leu) = N-terminal L-leucyl-L-lysyl-[protein] + tRNA(Leu) + H(+). It carries out the reaction N-terminal L-arginyl-[protein] + L-leucyl-tRNA(Leu) = N-terminal L-leucyl-L-arginyl-[protein] + tRNA(Leu) + H(+). The catalysed reaction is L-phenylalanyl-tRNA(Phe) + an N-terminal L-alpha-aminoacyl-[protein] = an N-terminal L-phenylalanyl-L-alpha-aminoacyl-[protein] + tRNA(Phe). Functionally, functions in the N-end rule pathway of protein degradation where it conjugates Leu, Phe and, less efficiently, Met from aminoacyl-tRNAs to the N-termini of proteins containing an N-terminal arginine or lysine. This is Leucyl/phenylalanyl-tRNA--protein transferase from Legionella pneumophila (strain Corby).